We begin with the raw amino-acid sequence, 336 residues long: Homoserine dehydrogenase (336 aa).

Position 8 (phenylalanine 8) interacts with NADPH. Residues alanine 10, isoleucine 11, and threonine 94 each contribute to the NAD(+) site. Residues isoleucine 11, threonine 94, and lysine 123 each contribute to the NADPH site. Isoleucine 11, threonine 94, and lysine 123 together coordinate NADP(+). Na(+) contacts are provided by glutamate 147, valine 150, and glycine 152. Residues glycine 205 and glutamate 208 each coordinate NADP(+). 2 residues coordinate L-homoserine: glutamate 208 and aspartate 219. Catalysis depends on lysine 223, which acts as the Proton donor. Glycine 315 serves as a coordination point for NADPH. Position 315 (glycine 315) interacts with NAD(+). An NADP(+)-binding site is contributed by glycine 315.

Belongs to the homoserine dehydrogenase family. It depends on a metal cation as a cofactor.

It catalyses the reaction L-homoserine + NADP(+) = L-aspartate 4-semialdehyde + NADPH + H(+). The catalysed reaction is L-homoserine + NAD(+) = L-aspartate 4-semialdehyde + NADH + H(+). The protein operates within amino-acid biosynthesis; L-methionine biosynthesis via de novo pathway; L-homoserine from L-aspartate: step 3/3. Its pathway is amino-acid biosynthesis; L-threonine biosynthesis; L-threonine from L-aspartate: step 3/5. Its function is as follows. Catalyzes the conversion of L-aspartate-beta-semialdehyde (L-Asa) to L-homoserine (L-Hse), the third step in the biosynthesis of threonine and methionine from aspartate. The polypeptide is Homoserine dehydrogenase (hom) (Methanocaldococcus jannaschii (strain ATCC 43067 / DSM 2661 / JAL-1 / JCM 10045 / NBRC 100440) (Methanococcus jannaschii)).